Consider the following 353-residue polypeptide: Nicotinate-nucleotide--dimethylbenzimidazole phosphoribosyltransferase (353 aa).

Glu-318 functions as the Proton acceptor in the catalytic mechanism.

It belongs to the CobT family.

It carries out the reaction 5,6-dimethylbenzimidazole + nicotinate beta-D-ribonucleotide = alpha-ribazole 5'-phosphate + nicotinate + H(+). Its pathway is nucleoside biosynthesis; alpha-ribazole biosynthesis; alpha-ribazole from 5,6-dimethylbenzimidazole: step 1/2. Catalyzes the synthesis of alpha-ribazole-5'-phosphate from nicotinate mononucleotide (NAMN) and 5,6-dimethylbenzimidazole (DMB). The chain is Nicotinate-nucleotide--dimethylbenzimidazole phosphoribosyltransferase from Roseiflexus sp. (strain RS-1).